We begin with the raw amino-acid sequence, 204 residues long: Probable GTP-binding protein EngB (204 aa).

The tract at residues 1-21 is disordered; it reads MKVSSAEFVTSGTRPAHYPPP. Residues 22-194 form the EngB-type G domain; the sequence is ELPEVAFAGR…WARIEVMLAA (173 aa). GTP-binding positions include 30–37, 57–61, 75–78, 142–145, and 173–175; these read GRSNVGKS, GRTQL, DLPG, TKCD, and FSA. The Mg(2+) site is built by S37 and T59.

This sequence belongs to the TRAFAC class TrmE-Era-EngA-EngB-Septin-like GTPase superfamily. EngB GTPase family. Mg(2+) is required as a cofactor.

In terms of biological role, necessary for normal cell division and for the maintenance of normal septation. This Geobacter metallireducens (strain ATCC 53774 / DSM 7210 / GS-15) protein is Probable GTP-binding protein EngB.